The chain runs to 397 residues: DnaJ homolog subfamily A member 4 (397 aa).

Residues Glu-4 to Gln-70 enclose the J domain. Ser-18 carries the post-translational modification Phosphoserine. A CR-type zinc finger spans residues Gly-122–Lys-206. The Zn(2+) site is built by Cys-135, Cys-138, Cys-151, Cys-154, Cys-178, Cys-181, Cys-194, and Cys-197. CXXCXGXG motif repeat units follow at residues Cys-135–Gly-142, Cys-151–Gly-158, Cys-178–Gly-185, and Cys-194–Lys-201. Cys-394 carries the post-translational modification Cysteine methyl ester. The S-farnesyl cysteine moiety is linked to residue Cys-394. Positions Gln-395 to Ala-397 are cleaved as a propeptide — removed in mature form.

It localises to the membrane. This Homo sapiens (Human) protein is DnaJ homolog subfamily A member 4 (DNAJA4).